The sequence spans 428 residues: MKRVELEGIPEVRGTVCPPPSKSGSHRALIAASLCDGSTELWNVLDAEDVRATLRLCRMLGAEVDVDGEERLEATVSGFGDSPRAPEDVVDCGNSGTTLRLGCGLAALVEGTTILTGDDSLRSRPVGDLLAALRSLGVDARGRVVRGEEYPPVVISGRPLRERVAVYGDVSSQFVSALLFLGAGLGALRVDVVGDLRSRPYVDMTVETLERFGVSVVREGSSFEVEGRPRSPGKLRVENDWSSAGYFVALGAIGGEMRIEGVDLDSSHPDRRIVEITREMGAEVRRIDGGIVVRSTGRLEGVEVDLSDSPDLVPTVAAMACFAEGVTRIENVGHLRYKEVDRLRALAAELPKFGVEVREGKDWLEIVGGEPVGARVDSRGDHRMAMALAVVGAFARGKTVVERADAVSISYPRFWEDLASVGVPVHSV.

Positions 22, 23, and 27 each coordinate 3-phosphoshikimate. Residue Lys-22 coordinates phosphoenolpyruvate. Gly-96 and Arg-124 together coordinate phosphoenolpyruvate. 3-phosphoshikimate is bound by residues Ser-171, Ser-172, Gln-173, Ser-198, Asp-311, and Lys-338. Gln-173 lines the phosphoenolpyruvate pocket. Catalysis depends on Asp-311, which acts as the Proton acceptor. Residues Arg-342 and Arg-383 each contribute to the phosphoenolpyruvate site.

It belongs to the EPSP synthase family. Monomer.

It is found in the cytoplasm. It carries out the reaction 3-phosphoshikimate + phosphoenolpyruvate = 5-O-(1-carboxyvinyl)-3-phosphoshikimate + phosphate. It participates in metabolic intermediate biosynthesis; chorismate biosynthesis. In terms of biological role, catalyzes the transfer of the enolpyruvyl moiety of phosphoenolpyruvate (PEP) to the 5-hydroxyl of shikimate-3-phosphate (S3P) to produce enolpyruvyl shikimate-3-phosphate and inorganic phosphate. This Methanopyrus kandleri (strain AV19 / DSM 6324 / JCM 9639 / NBRC 100938) protein is 3-phosphoshikimate 1-carboxyvinyltransferase.